Here is a 242-residue protein sequence, read N- to C-terminus: MEVADPSRAPPEYKDVAWIADTCKLLMGIGWTTNYVGMIYKSLKDETYAMALMALCCNFAWELTYALIYPFGSDLEMYVHFSGLMLNCGVMYTAVKNAHREWGHSPLVLRNLPLIFIICVSGFMSGHVALAAQVGPSLAQAWSAYGCQLLLSVGGLCQLLCRGHSRGASYFLWFSRFFGSLVLVPQDILRYKYWRVDHEYMGSPLYIWFVCIFLLLDGSYGICLWYVRRFERQTAVAHKKKK.

The next 7 membrane-spanning stretches (helical) occupy residues 15-37 (DVAW…NYVG), 51-71 (ALMA…IYPF), 75-95 (LEMY…YTAV), 112-132 (LPLI…ALAA), 141-161 (AWSA…QLLC), 169-189 (SYFL…QDIL), and 205-225 (LYIW…ICLW).

It belongs to the paxB family.

The protein resides in the membrane. The protein operates within secondary metabolite biosynthesis; terpenoid biosynthesis. Its function is as follows. Terpene cyclase; part of the gene cluster that mediates the biosynthesis of diterpenoid pyrones. The first step of the pathway is the synthesis of the alpha-pyrone moiety by the polyketide synthase dpfgA via condensation of one acetyl-CoA starter unit with 3 malonyl-CoA units and 2 methylations. The alpha-pyrone is then combined with geranylgeranyl pyrophosphate (GGPP) formed by the GGPP synthase dpfgD through the action of the prenyltransferase dpfgC to yield a linear alpha-pyrone diterpenoid. Subsequent steps in the diterpenoid pyrone biosynthetic pathway involve the decalin core formation, which is initiated by the epoxidation of the C10-C11 olefin by the FAD-dependent oxidoreductase dpfgE, and is followed by a cyclization cascade catalyzed by the terpene cyclase dpfgB. The short chain dehydrogenase/reductase dpfgG then oxidizes the 8S hydroxy group to a ketone and the short chain dehydrogenase/reductase dpfgH reduces the ketone to the 8R hydroxy group to yield higginsianin B. Higginsianin B is further methylated by the methyltransferase dpfgI to produce the intermediate named FDDP B. The cytochrome P450 monooxygenase dfgpJ then catalyzes a three-step oxidation at C-27 to generate a carboxylic acid as well as C-26 hydroxylation. Finally, methyltransferase dpfgK methylates the carboxylic acid generated by dpfgJ, yielding the final diterpenoid pyrones from the pathway which were named FDDP D and FDDP E. This chain is Terpene cyclase dpfgB, found in Gibberella zeae (strain ATCC MYA-4620 / CBS 123657 / FGSC 9075 / NRRL 31084 / PH-1) (Wheat head blight fungus).